A 20-amino-acid polypeptide reads, in one-letter code: Short cationic peptide-4d (20 aa).

The residue at position 20 (glutamate 20) is a Glutamic acid 1-amide.

Expressed by the venom gland.

It localises to the secreted. The protein is Short cationic peptide-4d of Cupiennius salei (American wandering spider).